Here is a 509-residue protein sequence, read N- to C-terminus: GMP synthase [glutamine-hydrolyzing] (509 aa).

The Glutamine amidotransferase type-1 domain occupies Lys4–Asp193. Cys79 acts as the Nucleophile in catalysis. Residues His167 and Glu169 contribute to the active site. Positions Trp194–Arg384 constitute a GMPS ATP-PPase domain. An ATP-binding site is contributed by Ser221–Ser227.

In terms of assembly, homodimer.

The catalysed reaction is XMP + L-glutamine + ATP + H2O = GMP + L-glutamate + AMP + diphosphate + 2 H(+). It functions in the pathway purine metabolism; GMP biosynthesis; GMP from XMP (L-Gln route): step 1/1. Catalyzes the synthesis of GMP from XMP. In Cytophaga hutchinsonii (strain ATCC 33406 / DSM 1761 / CIP 103989 / NBRC 15051 / NCIMB 9469 / D465), this protein is GMP synthase [glutamine-hydrolyzing].